A 160-amino-acid polypeptide reads, in one-letter code: Cytochrome b6-f complex subunit 4 (160 aa).

Helical transmembrane passes span 36–56 (LLYLFPVCILGTFACCIGLAV), 95–115 (LLGVLAMAAVPAGLITVPFIE), and 131–151 (LVFITGFIFAVWFGIGACLPI).

It belongs to the cytochrome b family. PetD subfamily. The 4 large subunits of the cytochrome b6-f complex are cytochrome b6, subunit IV (17 kDa polypeptide, petD), cytochrome f and the Rieske protein, while the 4 small subunits are petG, petL, petM and petN. The complex functions as a dimer.

Its subcellular location is the plastid. The protein localises to the chloroplast thylakoid membrane. Component of the cytochrome b6-f complex, which mediates electron transfer between photosystem II (PSII) and photosystem I (PSI), cyclic electron flow around PSI, and state transitions. The sequence is that of Cytochrome b6-f complex subunit 4 from Thalassiosira pseudonana (Marine diatom).